A 590-amino-acid chain; its full sequence is EGF-like and EMI domain-containing protein 1 (590 aa).

An N-terminal signal peptide occupies residues 1 to 23 (MTSPLCFWCFCVWAAANWPPGSA). An EMI domain is found at 44 to 104 (LSRPCAQAFI…RCCPGWIQWD (61 aa)). The EGF-like 1 domain occupies 105–145 (DEPGCFSSLSSLGTHFSGRECSYQDTRQCLCSQGFHGPHCQ). 11 cysteine pairs are disulfide-bonded: cysteine 109-cysteine 125, cysteine 135-cysteine 144, cysteine 168-cysteine 179, cysteine 175-cysteine 188, cysteine 190-cysteine 203, cysteine 209-cysteine 219, cysteine 215-cysteine 228, cysteine 230-cysteine 243, cysteine 249-cysteine 260, cysteine 256-cysteine 269, and cysteine 271-cysteine 284. Residues 164 to 204 (NVDECAVVNGGCQQRCINTLGTFHCECDTGYRRHADERTCI) enclose the EGF-like 2; calcium-binding domain. Residues 205-244 (KTDPCAGANGCAHLCQTENGMARCACHAGYQLSEDKKACE) form the EGF-like 3 domain. The EGF-like 4; calcium-binding domain maps to 245-285 (DINECAGELAPCAHHCVNSKGSFTCTCHPGFELGADRKHCY). The tract at residues 393–424 (RLAQNPPQPFPYLDPSLTASYEDEDNDDADSE) is disordered. Positions 413 to 424 (YEDEDNDDADSE) are enriched in acidic residues. Residues 445-481 (FGLDCSLSCEDCMNGGRCQEGKSGCLCPAEWTGLICN) form the EGF-like 5 domain. 3 disulfides stabilise this stretch: cysteine 449-cysteine 462, cysteine 456-cysteine 469, and cysteine 471-cysteine 480.

This Mus musculus (Mouse) protein is EGF-like and EMI domain-containing protein 1 (Egfem1).